Consider the following 239-residue polypeptide: Probable transcriptional regulator ycf27 (239 aa).

A Response regulatory domain is found at 7 to 120 (KILVVDDEIS…ELEARIRSLL (114 aa)). Asp-56 is subject to 4-aspartylphosphate. Residues 76-94 (DIPIIMLTALGDVADRITG) constitute a DNA-binding region (H-T-H motif). The ompR/PhoB-type DNA-binding region spans 135-236 (GENLQIGFLK…ARGIGYLFQN (102 aa)).

It localises to the plastid. The protein localises to the cyanelle. Functionally, probable promoter-specific protein mediating the interaction between DNA and RNA polymerase. The protein is Probable transcriptional regulator ycf27 (ycf27) of Cyanophora paradoxa.